A 429-amino-acid chain; its full sequence is UDP-N-acetylglucosamine 1-carboxyvinyltransferase (429 aa).

Position 22-23 (22-23 (KN)) interacts with phosphoenolpyruvate. Arg-102 provides a ligand contact to UDP-N-acetyl-alpha-D-glucosamine. Residue Cys-126 is the Proton donor of the active site. Cys-126 is modified (2-(S-cysteinyl)pyruvic acid O-phosphothioketal). UDP-N-acetyl-alpha-D-glucosamine contacts are provided by residues 131-135 (RPVDL), 171-174 (KVSV), Asp-316, and Ile-338.

Belongs to the EPSP synthase family. MurA subfamily.

The protein resides in the cytoplasm. It carries out the reaction phosphoenolpyruvate + UDP-N-acetyl-alpha-D-glucosamine = UDP-N-acetyl-3-O-(1-carboxyvinyl)-alpha-D-glucosamine + phosphate. It participates in cell wall biogenesis; peptidoglycan biosynthesis. In terms of biological role, cell wall formation. Adds enolpyruvyl to UDP-N-acetylglucosamine. The chain is UDP-N-acetylglucosamine 1-carboxyvinyltransferase from Brucella abortus (strain S19).